Here is a 246-residue protein sequence, read N- to C-terminus: Chloroplastic group IIB intron splicing facilitator CRS2-A, chloroplastic (246 aa).

A chloroplast-targeting transit peptide spans 1–34 (MFCASSSPITSPLYPKAYKFSQTKSNSKRFSSLR). Tyr-64 contributes to the tRNA binding site. The Proton acceptor role is filled by His-69. 3 residues coordinate tRNA: Tyr-114, Asn-116, and Asn-162.

Belongs to the PTH family. CRS2 subfamily. Part of large ribonucleo-protein complexes that include group IIB introns and either CAF1 or CAF2.

The protein localises to the plastid. It localises to the chloroplast stroma. Required for the splicing of group IIB introns in chloroplasts. This Arabidopsis thaliana (Mouse-ear cress) protein is Chloroplastic group IIB intron splicing facilitator CRS2-A, chloroplastic (CRS2A).